A 208-amino-acid chain; its full sequence is Large ribosomal subunit protein eL13 (208 aa).

2 positions are modified to phosphoserine: Ser177 and Ser180.

It belongs to the eukaryotic ribosomal protein eL13 family. In terms of assembly, component of the large ribosomal subunit (LSU). Mature yeast ribosomes consist of a small (40S) and a large (60S) subunit. The 40S small subunit contains 1 molecule of ribosomal RNA (18S rRNA) and at least 33 different proteins. The large 60S subunit contains 3 rRNA molecules (25S, 5.8S and 5S rRNA) and at least 46 different proteins.

Its subcellular location is the cytoplasm. Component of the ribosome, a large ribonucleoprotein complex responsible for the synthesis of proteins in the cell. The small ribosomal subunit (SSU) binds messenger RNAs (mRNAs) and translates the encoded message by selecting cognate aminoacyl-transfer RNA (tRNA) molecules. The large subunit (LSU) contains the ribosomal catalytic site termed the peptidyl transferase center (PTC), which catalyzes the formation of peptide bonds, thereby polymerizing the amino acids delivered by tRNAs into a polypeptide chain. The nascent polypeptides leave the ribosome through a tunnel in the LSU and interact with protein factors that function in enzymatic processing, targeting, and the membrane insertion of nascent chains at the exit of the ribosomal tunnel. This is Large ribosomal subunit protein eL13 (rpl13) from Schizosaccharomyces pombe (strain 972 / ATCC 24843) (Fission yeast).